Here is a 384-residue protein sequence, read N- to C-terminus: Galactokinase (384 aa).

34 to 37 provides a ligand contact to substrate; the sequence is EHTD. 123-129 serves as a coordination point for ATP; it reads SSGLSSS. Positions 129 and 161 each coordinate Mg(2+). Catalysis depends on aspartate 173, which acts as the Proton acceptor. Tyrosine 222 lines the substrate pocket.

The protein belongs to the GHMP kinase family. GalK subfamily.

It is found in the cytoplasm. It carries out the reaction alpha-D-galactose + ATP = alpha-D-galactose 1-phosphate + ADP + H(+). The protein operates within carbohydrate metabolism; galactose metabolism. In terms of biological role, catalyzes the transfer of the gamma-phosphate of ATP to D-galactose to form alpha-D-galactose-1-phosphate (Gal-1-P). The chain is Galactokinase from Actinobacillus pleuropneumoniae serotype 5b (strain L20).